The primary structure comprises 1420 residues: MMDRNELPFCNKTIDRAAMKRLIGKLVVCFGIASTTNILDQVKVLGFQQATEASISLGIDDLSAVPTRGWLVRDAEKQGYVSEGHYRCGSLHAIEKLRQSIEAWYATSECLKREMSPSFKMIDPLNPVHMMSVSGARGTISQVHQLLGMRGLMADPRGQVIDLPIRRNLREGLSLTEYIISCYGARKGVVDTAVRTSDAGYLTRRLVEVVQHIAVRRRDCETPRSLAFLTSNTGERRRGFLGTMPHQGLVGRVLADHVYWDVRCIATRNQDISDGLASNLMASSQPIHVRSPLTCKSIFWICQFCYGWSLAHCNLVELGEAVGIIAGQSIGEPGTQLTLRTFHTGGVFTGDIAEYVRIPFNGLIKFDERLLHPTRTRHGHPAWMCRNDLPLFIGNSVGTQNSLIPAQSLLMIRTGQYVESQQVIAEVRAKEFPPKECIRKPIYPNSRGEIHWSKFVWHVRDSICNIARLVREASHIWILSGSPSKFDGNSFFHKDQDRVRIKPHPIKRIRSHSEGIFEAQASASNCVDRRKGIQEFGTDSKYFSNWSKRPRSNYILSNVWLERAELENSVSLLMERCQKNIKKLDFVSINVQLNNGSDQDHIFATYENFEYQTIVSGIIKYGTVEIKPVNPKRLQLDGGTGNKSSRPWCRVVRKGNFFLIPEEVYLTHEPSSSILVTNNAIVKKGAQITNNIITKSGGLIRMRKRSRDATTIRILPGYIYNPEKQINISKRGNTLLAPGNRISDDIEVKNWIYLQPFTFRRKGKTFVLMTPVSEYNLSSDSLAQVASRFDKPKTQRRAKAKTLSFICCKNGEKIEVINDVPTQLVRLCLIIEWQKYLHETLPRKRNYFSLISVKISYLFKTFLQVNPMVSPPTQRGVRVDEIFRTSTPLGKPSPPQLDLANSCCKSAVNCQGIIHLTLEPATSFLILSPFNLSRNNSVTDTRDGGCGGEIGKYFYGSEDGFFCIGENKKKISLSSKCISENYANPNVEEGWIKARRASSNLGQRKAEEVGLVGTLSPISCSSIPHHLSLGGKNLSTRKGFVDYSIDKSEHQDFYLIDESKLLLKCPINFYVKKGFLDKPSYLPTRVFSREIMLISLGLLISESRYLHRDRTCFQSGQVMAIHQDYSLVRTGKTFLATRGANPHKSSGDILEEGDTLITLPYDRLKSGDITQGLPKVEQLLESRSIASISAGIGDLFEKWCQNITKLIGNPWSHLLGAGRSMEHCQLILIDQIRKVYESQGVRICDKHLEIIVRQLTSRVVASEDGVTNVFLPGELVELSQAERINRVLKKSIFYEPIVLGMTRASLSTTSFLAEASFQETTRVLAKAALRGRIDWLKGLKENVVIGDSVPVGTGSPEIYCQLNINKEKESRLASGGSKKLTKWETGSSLSGYHKKRDFNPSFFIRKELNRSFTRLHLDMW.

Residues Cys-220, Cys-295, Cys-302, and Cys-305 each contribute to the Zn(2+) site.

It belongs to the RNA polymerase beta' chain family. RpoC2 subfamily. In terms of assembly, in plastids the minimal PEP RNA polymerase catalytic core is composed of four subunits: alpha, beta, beta', and beta''. When a (nuclear-encoded) sigma factor is associated with the core the holoenzyme is formed, which can initiate transcription. Zn(2+) is required as a cofactor.

Its subcellular location is the plastid. It localises to the chloroplast. The enzyme catalyses RNA(n) + a ribonucleoside 5'-triphosphate = RNA(n+1) + diphosphate. DNA-dependent RNA polymerase catalyzes the transcription of DNA into RNA using the four ribonucleoside triphosphates as substrates. This Adiantum capillus-veneris (Maidenhair fern) protein is DNA-directed RNA polymerase subunit beta''.